The chain runs to 373 residues: 5-amino-6-(5-phospho-D-ribitylamino)uracil phosphatase, chloroplastic (373 aa).

This sequence belongs to the HAD-like hydrolase superfamily. DOG/GPP family. As to quaternary structure, homodimer. The cofactor is Mg(2+).

The protein resides in the plastid. The protein localises to the chloroplast. The enzyme catalyses 5-amino-6-(5-phospho-D-ribitylamino)uracil + H2O = 5-amino-6-(D-ribitylamino)uracil + phosphate. Its function is as follows. Catalyzes the dephosphorylation of 5-amino-6-(5-phospho-D-ribitylamino)uracil, also known as ARPP, but has no activity toward flavin mononucleotide (FMN). This is 5-amino-6-(5-phospho-D-ribitylamino)uracil phosphatase, chloroplastic from Arabidopsis thaliana (Mouse-ear cress).